Consider the following 99-residue polypeptide: Acylphosphatase (99 aa).

Positions 14–99 (AVDVTVTGRV…DQGLRSFGVR (86 aa)) constitute an Acylphosphatase-like domain. Residues arginine 29 and asparagine 47 contribute to the active site.

Belongs to the acylphosphatase family.

The catalysed reaction is an acyl phosphate + H2O = a carboxylate + phosphate + H(+). The sequence is that of Acylphosphatase (acyP) from Nocardioides sp. (strain ATCC BAA-499 / JS614).